The primary structure comprises 501 residues: MNQAILQLSEIEKAFPGVKALDKASLNVYPGRVMALMGENGAGKSTLMKVLTGIYSRDAGEIVYQGQSAQFKGPRDSQQAGISIIHQELNLIRELTIAENIFLGREITSAFGRIDWPQMYAEADKLLARLKVKHSSKTLLGQLSLGEQQMVEIAKALSFESKVIIMDEPTDALTDTETEALFSVIRELREQGCGIVYISHRLKEIFEICDDITVLRDGKFIGQCEVVQTDEDGLIEMMVGRKLEEQYPRIDVVHGQTCLEVIGLTGSGVHDVSFTLKRGEILGISGLMGAGRTELMKVIYGALPSERGVINLDNRTINPISPQDGLANGIAYISEDRKGDGLVLGLSVKENMSLCALDKLSKGVQIQHQDEVVAVDDFIQLFNIKTPSREQIIGNLSGGNQQKVAIAKGLMTKPKVLILDEPTRGVDVGAKKEIYQLINKFKAEGMSIILVSSEMPEVLGMSDRILVMHEGRITGEFEAKHADQEKLMACAVGKKVSEEAA.

ABC transporter domains are found at residues 6–242 (LQLS…VGRK) and 253–495 (VHGQ…VGKK). ATP is bound at residue 38–45 (GENGAGKS).

It belongs to the ABC transporter superfamily. Ribose importer (TC 3.A.1.2.1) family. In terms of assembly, the complex is composed of an ATP-binding protein (RbsA), two transmembrane proteins (RbsC) and a solute-binding protein (RbsB).

The protein resides in the cell inner membrane. The catalysed reaction is D-ribose(out) + ATP + H2O = D-ribose(in) + ADP + phosphate + H(+). Functionally, part of the ABC transporter complex RbsABC involved in ribose import. Responsible for energy coupling to the transport system. The polypeptide is Ribose import ATP-binding protein RbsA (Vibrio vulnificus (strain CMCP6)).